Consider the following 443-residue polypeptide: Threonine/serine transporter TdcC (443 aa).

11 helical membrane-spanning segments follow: residues 22-42 (TTWT…FFPI), 44-64 (AGFG…PIAF), 97-117 (GVVI…IYGV), 140-160 (FVAL…KDLM), 163-183 (VMSY…LSLI), 207-227 (ILIT…FSPI), 261-281 (MLMV…LSPA), 311-331 (FAIT…FKSF), 366-386 (ISMI…PNIL), 389-409 (IEAM…MYAI), and 423-443 (DNVF…YKLF).

This sequence belongs to the amino acid/polyamine transporter 2 family. SdaC/TdcC subfamily.

It localises to the cell inner membrane. The enzyme catalyses L-threonine(in) + H(+)(in) = L-threonine(out) + H(+)(out). The catalysed reaction is L-serine(in) + H(+)(in) = L-serine(out) + H(+)(out). Functionally, involved in the import of threonine and serine into the cell, with the concomitant import of a proton (symport system). The protein is Threonine/serine transporter TdcC of Shigella boydii serotype 18 (strain CDC 3083-94 / BS512).